The following is a 230-amino-acid chain: N-(5'-phosphoribosyl)anthranilate isomerase (230 aa).

The protein belongs to the TrpF family.

The catalysed reaction is N-(5-phospho-beta-D-ribosyl)anthranilate = 1-(2-carboxyphenylamino)-1-deoxy-D-ribulose 5-phosphate. It functions in the pathway amino-acid biosynthesis; L-tryptophan biosynthesis; L-tryptophan from chorismate: step 3/5. The sequence is that of N-(5'-phosphoribosyl)anthranilate isomerase from Trichodesmium erythraeum (strain IMS101).